Reading from the N-terminus, the 428-residue chain is Immunoglobulin superfamily containing leucine-rich repeat protein (428 aa).

The N-terminal stretch at 1–18 (MRALCLLCWAVLLNLVRA) is a signal peptide. Residues 19 to 50 (CPEPCDCGEKYGFQIADCAYRDLEGVPPGFPA) enclose the LRRNT domain. Residue Asn51 is glycosylated (N-linked (GlcNAc...) asparagine). LRR repeat units follow at residues 51 to 72 (NVTT…AFRE), 75 to 98 (LLQS…APLS), 99 to 122 (HLKS…HNLS), 123 to 144 (ALQL…AFSS), and 147 to 168 (ALRS…TFAP). The LRRCT domain maps to 180–231 (NPFDCTCGIVWFKTWALASAVSIPEQDNIACTTPHVLKGIPLGRLPPLPCSA). Positions 232 to 343 (PSVQLSYQPS…GSAESSVNVA (112 aa)) constitute an Ig-like domain. Cys257 and Cys327 form a disulfide bridge. The N-linked (GlcNAc...) asparagine glycan is linked to Asn309.

As to expression, detected in thyroid, heart, retina and spinal cord.

It localises to the secreted. This Mus musculus (Mouse) protein is Immunoglobulin superfamily containing leucine-rich repeat protein (Islr).